Consider the following 89-residue polypeptide: Cell division topological specificity factor (89 aa).

It belongs to the MinE family.

Its function is as follows. Prevents the cell division inhibition by proteins MinC and MinD at internal division sites while permitting inhibition at polar sites. This ensures cell division at the proper site by restricting the formation of a division septum at the midpoint of the long axis of the cell. The polypeptide is Cell division topological specificity factor (Paracoccus denitrificans (strain Pd 1222)).